The following is a 577-amino-acid chain: Arginine--tRNA ligase (577 aa).

The 'HIGH' region signature appears at 122–132 (PNVAKEMHVGH).

The protein belongs to the class-I aminoacyl-tRNA synthetase family. As to quaternary structure, monomer.

Its subcellular location is the cytoplasm. The enzyme catalyses tRNA(Arg) + L-arginine + ATP = L-arginyl-tRNA(Arg) + AMP + diphosphate. This chain is Arginine--tRNA ligase, found in Shigella flexneri serotype 5b (strain 8401).